The following is a 361-amino-acid chain: Phospho-N-acetylmuramoyl-pentapeptide-transferase (361 aa).

10 helical membrane passes run 26 to 46 (AILG…VMIR), 73 to 93 (TMGG…WADL), 97 to 117 (YVWV…VDDY), 134 to 154 (YFWQ…TASM), 168 to 188 (VSLT…IVGS), 200 to 220 (GLAI…AYLS), 237 to 257 (TGEL…FLWF), 264 to 284 (VFMG…VAVI), 289 to 309 (IVLF…ILQV), and 340 to 360 (IVRF…SLKI).

Belongs to the glycosyltransferase 4 family. MraY subfamily. The cofactor is Mg(2+).

Its subcellular location is the cell inner membrane. The enzyme catalyses UDP-N-acetyl-alpha-D-muramoyl-L-alanyl-gamma-D-glutamyl-meso-2,6-diaminopimeloyl-D-alanyl-D-alanine + di-trans,octa-cis-undecaprenyl phosphate = di-trans,octa-cis-undecaprenyl diphospho-N-acetyl-alpha-D-muramoyl-L-alanyl-D-glutamyl-meso-2,6-diaminopimeloyl-D-alanyl-D-alanine + UMP. It functions in the pathway cell wall biogenesis; peptidoglycan biosynthesis. Catalyzes the initial step of the lipid cycle reactions in the biosynthesis of the cell wall peptidoglycan: transfers peptidoglycan precursor phospho-MurNAc-pentapeptide from UDP-MurNAc-pentapeptide onto the lipid carrier undecaprenyl phosphate, yielding undecaprenyl-pyrophosphoryl-MurNAc-pentapeptide, known as lipid I. This Marinobacter nauticus (strain ATCC 700491 / DSM 11845 / VT8) (Marinobacter aquaeolei) protein is Phospho-N-acetylmuramoyl-pentapeptide-transferase.